Here is a 216-residue protein sequence, read N- to C-terminus: Phosphatidylserine decarboxylase proenzyme (216 aa).

S182 serves as the catalytic Schiff-base intermediate with substrate; via pyruvic acid. S182 carries the post-translational modification Pyruvic acid (Ser); by autocatalysis.

This sequence belongs to the phosphatidylserine decarboxylase family. PSD-A subfamily. As to quaternary structure, heterodimer of a large membrane-associated beta subunit and a small pyruvoyl-containing alpha subunit. It depends on pyruvate as a cofactor. In terms of processing, is synthesized initially as an inactive proenzyme. Formation of the active enzyme involves a self-maturation process in which the active site pyruvoyl group is generated from an internal serine residue via an autocatalytic post-translational modification. Two non-identical subunits are generated from the proenzyme in this reaction, and the pyruvate is formed at the N-terminus of the alpha chain, which is derived from the carboxyl end of the proenzyme. The post-translation cleavage follows an unusual pathway, termed non-hydrolytic serinolysis, in which the side chain hydroxyl group of the serine supplies its oxygen atom to form the C-terminus of the beta chain, while the remainder of the serine residue undergoes an oxidative deamination to produce ammonia and the pyruvoyl prosthetic group on the alpha chain.

It localises to the cell membrane. It catalyses the reaction a 1,2-diacyl-sn-glycero-3-phospho-L-serine + H(+) = a 1,2-diacyl-sn-glycero-3-phosphoethanolamine + CO2. Its pathway is phospholipid metabolism; phosphatidylethanolamine biosynthesis; phosphatidylethanolamine from CDP-diacylglycerol: step 2/2. In terms of biological role, catalyzes the formation of phosphatidylethanolamine (PtdEtn) from phosphatidylserine (PtdSer). This chain is Phosphatidylserine decarboxylase proenzyme, found in Burkholderia mallei (strain NCTC 10247).